A 519-amino-acid polypeptide reads, in one-letter code: Carboxyl-terminal-processing peptidase 3, chloroplastic (519 aa).

Positions 186 to 274 constitute a PDZ domain; the sequence is YQSFRIGSDG…IKLKNVNGSG (89 aa). Active-site charge relay system residues include Ser-407 and Lys-432.

Belongs to the peptidase S41A family.

Its subcellular location is the plastid. It localises to the chloroplast thylakoid lumen. The catalysed reaction is The enzyme shows specific recognition of a C-terminal tripeptide, Xaa-Yaa-Zaa, in which Xaa is preferably Ala or Leu, Yaa is preferably Ala or Tyr, and Zaa is preferably Ala, but then cleaves at a variable distance from the C-terminus. A typical cleavage is -Ala-Ala-|-Arg-Ala-Ala-Lys-Glu-Asn-Tyr-Ala-Leu-Ala-Ala.. Protease involved in the C-terminal processing of the chloroplastic D1 protein of photosystem II. This proteolytic processing is necessary to allow the light-driven assembly of the tetranuclear manganese cluster, which is responsible for photosynthetic water oxidation. This chain is Carboxyl-terminal-processing peptidase 3, chloroplastic (CTPA3), found in Arabidopsis thaliana (Mouse-ear cress).